A 309-amino-acid polypeptide reads, in one-letter code: (S)-sulfolactate dehydrogenase (309 aa).

Residues 151-152 (GI), D171, 231-233 (TAR), and D257 each bind NAD(+). R233 is a catalytic residue. E262 is an active-site residue. The active-site Proton donor is the H281. An NAD(+)-binding site is contributed by 281 to 284 (HIAG).

Belongs to the D-isomer specific 2-hydroxyacid dehydrogenase family.

The catalysed reaction is (2S)-3-sulfolactate + NAD(+) = 3-sulfopyruvate + NADH + H(+). Functionally, dehydrogenase of the (R,S)-sulfolactate degradation pathway that only acts on the (S)-enantiomer of 3-sulfolactate. Together with ComC, provides a racemase system that converts (2S)-3-sulfolactate to (2R)-3-sulfolactate, which is degraded further by (2R)-sulfolactate sulfo-lyase. Specific for NAD. Also able to form sulfolactate from sulfopyruvate. This is (S)-sulfolactate dehydrogenase (slcC) from Chromohalobacter salexigens (strain ATCC BAA-138 / DSM 3043 / CIP 106854 / NCIMB 13768 / 1H11).